A 162-amino-acid chain; its full sequence is UPF0260 protein Atu0932 (162 aa).

The protein belongs to the UPF0260 family.

This is UPF0260 protein Atu0932 from Agrobacterium fabrum (strain C58 / ATCC 33970) (Agrobacterium tumefaciens (strain C58)).